The following is an 863-amino-acid chain: DNA replication licensing factor MCM4 (863 aa).

A compositionally biased stretch (low complexity) spans 1-10; it reads MSSPASTPSR. Disordered stretches follow at residues 1-60 and 91-126; these read MSSP…VDLQ and TYGT…KGLQ. The residue at position 2 (Ser2) is an N-acetylserine. At Ser6 the chain carries Phosphoserine; by CDC7. Thr7 and Thr19 each carry phosphothreonine. 4 positions are modified to phosphoserine: Ser26, Ser31, Ser32, and Ser34. Phosphothreonine is present on Thr102. At Ser105 the chain carries Phosphoserine. Residue Thr110 is modified to Phosphothreonine. Ser120, Ser131, Ser142, and Ser145 each carry phosphoserine. Position 220 is an N6-acetyllysine (Lys220). Lys439 participates in a covalent cross-link: Glycyl lysine isopeptide (Lys-Gly) (interchain with G-Cter in SUMO2). The residue at position 450 (Lys450) is an N6-acetyllysine. In terms of domain architecture, MCM spans 458–667; that stretch reads IYERLASALA…YDRRLAHHLV (210 aa). 8 residues coordinate ATP: Tyr471, Arg497, Lys516, Ser517, Asn618, Arg643, Arg732, and Glu735. An Arginine finger motif is present at residues 642 to 645; that stretch reads SRFD. Lys798 participates in a covalent cross-link: Glycyl lysine isopeptide (Lys-Gly) (interchain with G-Cter in SUMO2). Lys858 carries the post-translational modification N6-acetyllysine.

This sequence belongs to the MCM family. Component of the MCM2-7 complex. The complex forms a toroidal hexameric ring with the proposed subunit order MCM2-MCM6-MCM4-MCM7-MCM3-MCM5. Component of the CMG helicase complex, a hexameric ring of related MCM2-7 subunits stabilized by CDC45 and the tetrameric GINS complex. Interacts with MCMBP. In terms of processing, sumoylated; SUMO2 modified in response to stress caused by inhibition of proteasome activity (in vitro).

It is found in the nucleus. Its subcellular location is the chromosome. The catalysed reaction is ATP + H2O = ADP + phosphate + H(+). Its function is as follows. Acts as a component of the MCM2-7 complex (MCM complex) which is the replicative helicase essential for 'once per cell cycle' DNA replication initiation and elongation in eukaryotic cells. Core component of CDC45-MCM-GINS (CMG) helicase, the molecular machine that unwinds template DNA during replication, and around which the replisome is built. The active ATPase sites in the MCM2-7 ring are formed through the interaction surfaces of two neighboring subunits such that a critical structure of a conserved arginine finger motif is provided in trans relative to the ATP-binding site of the Walker A box of the adjacent subunit. The six ATPase active sites, however, are likely to contribute differentially to the complex helicase activity. In Homo sapiens (Human), this protein is DNA replication licensing factor MCM4.